A 404-amino-acid polypeptide reads, in one-letter code: Glucose-1-phosphate adenylyltransferase (404 aa).

Alpha-D-glucose 1-phosphate is bound by residues Tyr99, Gly164, 179-180, and Ser197; that span reads EK.

Belongs to the bacterial/plant glucose-1-phosphate adenylyltransferase family.

It carries out the reaction alpha-D-glucose 1-phosphate + ATP + H(+) = ADP-alpha-D-glucose + diphosphate. It functions in the pathway capsule biogenesis; capsule polysaccharide biosynthesis. Its pathway is glycan biosynthesis; glycogen biosynthesis. Its function is as follows. Involved in the biosynthesis of ADP-glucose, a building block, required in the biosynthesis of maltose-1-phosphate (M1P) and in the elongation reactions to produce linear alpha-1,4-glucans. Catalyzes the reaction between ATP and alpha-D-glucose 1-phosphate (G1P) to produce pyrophosphate and ADP-Glc. The sequence is that of Glucose-1-phosphate adenylyltransferase from Mycobacterium leprae (strain Br4923).